The sequence spans 192 residues: Large ribosomal subunit protein bL9 (192 aa).

The segment at 172–192 (DALRPEDFFDPEADGVDEDEA) is disordered. Residues 179 to 192 (FFDPEADGVDEDEA) show a composition bias toward acidic residues.

This sequence belongs to the bacterial ribosomal protein bL9 family.

Binds to the 23S rRNA. The protein is Large ribosomal subunit protein bL9 of Rhizobium leguminosarum bv. trifolii (strain WSM2304).